A 410-amino-acid chain; its full sequence is Pyruvate dehydrogenase complex protein X component, mitochondrial (410 aa).

The transit peptide at Met1–Leu30 directs the protein to the mitochondrion. One can recognise a Lipoyl-binding domain in the interval Val32 to Ala108. Residue Lys73 is modified to N6-lipoyllysine. The region spanning Thr169 to Leu210 is the Peripheral subunit-binding (PSBD) domain.

This sequence belongs to the 2-oxoacid dehydrogenase family. As to quaternary structure, eukaryotic pyruvate dehydrogenase (PDH) complexes are organized as a core consisting of the oligomeric dihydrolipoamide acetyl-transferase (E2), around which are arranged multiple copies of pyruvate dehydrogenase (E1), dihydrolipoamide dehydrogenase (E3) and protein X (E3BP) bound by non-covalent bonds.

The protein localises to the mitochondrion matrix. Required for anchoring dihydrolipoamide dehydrogenase (E3) to the dihydrolipoamide transacetylase (E2) core of the pyruvate dehydrogenase complexes of eukaryotes. This specific binding is essential for a functional PDH complex. This Saccharomyces cerevisiae (strain ATCC 204508 / S288c) (Baker's yeast) protein is Pyruvate dehydrogenase complex protein X component, mitochondrial (PDX1).